Consider the following 341-residue polypeptide: Transcription factor VIP1 (341 aa).

Disordered regions lie at residues 1–33, 59–106, and 135–156; these read MEGG…HRRA, SLDF…PEAR, and SSGE…DGEM. Residues 1–162 form a necessary and sufficient for transient T-DNA transformation end expression region; the sequence is MEGGGRGPNQ…DGEMSSASFN (162 aa). A compositionally biased stretch (basic and acidic residues) spans 15–24; it reads EIEHMPEAPR. The span at 71–80 shows a compositional bias: low complexity; the sequence is QSQQQPQASP. Serine 79 is modified (phosphoserine). The involved in homomultimerization and histone H2A binding stretch occupies residues 163–341; sequence IESILASVSG…PSYMDFTKRG (179 aa). The bZIP domain occupies 194–257; sequence DPKRAKRILA…SELNTENKHL (64 aa). Residues 196–217 form a basic motif region; the sequence is KRAKRILANRQSAARSKERKIR. Residues 198–205 carry the Nuclear localization signal motif; that stretch reads AKRILANR. The segment at 222 to 257 is leucine-zipper; it reads LERKVQTLQNEATTLSAQVTMLQRGTSELNTENKHL. Positions 307–331 are enriched in polar residues; that stretch reads SQQSAMNQFGNKTNQQMSTNGQPSL. Residues 307–341 are disordered; the sequence is SQQSAMNQFGNKTNQQMSTNGQPSLPSYMDFTKRG.

Belongs to the bZIP family. Forms homomultimers. Interacts with Agrobacterium tumefaciens VirE2 and mediates its translocation to the host nucleus. Binds to VIP2. Forms a complex made of Agrobacterium VirE2, VIP1, VIP2 and single-stranded DNA (ssDNA). The interaction with KAP1 mediates its nuclear import. Binds to the H2A histone RAT5. Interacts with MPK3 and Agrobacterium virF. Forms a complex made of VIP1, VBF and Agrobacterium virE2. Interacts with SCF(VBF) E3 ubiquitin ligase complex. Binds directly to VBF. Forms heterodimers with BZIP34 and BZIP61. Post-translationally, phosphorylated by MPK3. This phosphorylation promotes nuclear localization. Mostly expressed in dividing cells, present in leaves, roots and seedlings.

Its subcellular location is the cytoplasm. It localises to the nucleus. Its function is as follows. Transcription activator that binds specifically to the VIP1 response elements (VREs) DNA sequence 5'-ACNGCT-3' found in some stress genes (e.g. TRX8 and MYB44), when phosphorylated/activated by MPK3. Required for Agrobacterium VirE2 nuclear import and tumorigenicity. Promotes transient expression of T-DNA in early stages by interacting with VirE2 in complex with the T-DNA and facilitating its translocation to the nucleus, and mediates stable genetic transformation by Agrobacterium by binding H2A histone. Prevents cell differentiation and shoot formation. Limits sulfate utilization efficiency (SUE) and sulfate uptake, especially in low-sulfur conditions. Plays a role in osmosensory response by binding to the 5'-AGCTGT/G-3' DNA sequence found in the promoters of the hypoosmolarity-responsive genes CYP707A1 and CYP707A3. Involved in the negative regulation of touch-induced root bending and salt-dependent root bending. The polypeptide is Transcription factor VIP1 (Arabidopsis thaliana (Mouse-ear cress)).